The primary structure comprises 143 residues: Sirohydrochlorin cobaltochelatase (143 aa).

His9 acts as the Proton acceptor in catalysis. Residue His9 participates in Co(2+) binding. A Ni(2+)-binding site is contributed by His9. Residues Glu45 and 70 to 75 contribute to the substrate site; that span reads LAHGVH. A Co(2+)-binding site is contributed by His75. Residue His75 coordinates Ni(2+).

It belongs to the CbiX family. CbiXS subfamily. In terms of assembly, homotetramer; dimer of dimers.

The enzyme catalyses Co-sirohydrochlorin + 2 H(+) = sirohydrochlorin + Co(2+). The catalysed reaction is Ni-sirohydrochlorin + 2 H(+) = sirohydrochlorin + Ni(2+). The protein operates within cofactor biosynthesis; adenosylcobalamin biosynthesis; cob(II)yrinate a,c-diamide from sirohydrochlorin (anaerobic route): step 1/10. In terms of biological role, catalyzes the insertion of Co(2+) into sirohydrochlorin as part of the anaerobic pathway to cobalamin biosynthesis. Involved in the biosynthesis of the unique nickel-containing tetrapyrrole coenzyme F430, the prosthetic group of methyl-coenzyme M reductase (MCR), which plays a key role in methanogenesis and anaerobic methane oxidation. Catalyzes the insertion of Ni(2+) into sirohydrochlorin to yield Ni-sirohydrochlorin. This chain is Sirohydrochlorin cobaltochelatase, found in Methanopyrus kandleri (strain AV19 / DSM 6324 / JCM 9639 / NBRC 100938).